The chain runs to 239 residues: Sugar fermentation stimulation protein homolog (239 aa).

It belongs to the SfsA family.

The chain is Sugar fermentation stimulation protein homolog from Synechococcus sp. (strain JA-2-3B'a(2-13)) (Cyanobacteria bacterium Yellowstone B-Prime).